The sequence spans 223 residues: Cutinase 4 (223 aa).

A signal peptide spans 1 to 26; that stretch reads MPLPLLPPLLLPLEALLDLALHLVDS. An intrachain disulfide couples Cys60 to Cys133. The active-site Nucleophile is the Ser144. Cys187 and Cys194 are oxidised to a cystine. Residue Asp191 is part of the active site. The active-site Proton donor/acceptor is the His203.

This sequence belongs to the cutinase family. The 2 disulfide bonds play a critical role in holding the catalytic residues in juxta-position; reduction of the disulfide bridges results in the complete inactivation of the enzyme.

It localises to the secreted. The catalysed reaction is cutin + H2O = cutin monomers.. Catalyzes the hydrolysis of complex carboxylic polyesters found in the cell wall of plants. Degrades cutin, a macromolecule that forms the structure of the plant cuticle. Also degrades suberin, a specialized macromolecule found in the cell wall of various plant tissues. The chain is Cutinase 4 from Emericella nidulans (strain FGSC A4 / ATCC 38163 / CBS 112.46 / NRRL 194 / M139) (Aspergillus nidulans).